Here is a 56-residue protein sequence, read N- to C-terminus: Small ribosomal subunit protein bS21 (56 aa).

Belongs to the bacterial ribosomal protein bS21 family.

This chain is Small ribosomal subunit protein bS21 (rpsU), found in Geobacillus stearothermophilus (Bacillus stearothermophilus).